A 232-amino-acid polypeptide reads, in one-letter code: RNA chaperone ProQ (232 aa).

The interval 105–182 (EAKARVQAQR…REEQHTPVSD (78 aa)) is disordered. Residues 117–136 (QQAKKREAAATAGEKEDAPR) are compositionally biased toward basic and acidic residues. The span at 137–146 (RERKPRPTTP) shows a compositional bias: basic residues. Residues 147-177 (RRKEGAERKPRAQKPVEKAPKTVKAPREEQH) are compositionally biased toward basic and acidic residues.

Belongs to the ProQ family.

Its subcellular location is the cytoplasm. In terms of biological role, RNA chaperone with significant RNA binding, RNA strand exchange and RNA duplexing activities. May regulate ProP activity through an RNA-based, post-transcriptional mechanism. The sequence is that of RNA chaperone ProQ from Escherichia coli (strain K12).